The sequence spans 254 residues: NH(3)-dependent NAD(+) synthetase (254 aa).

32–39 (GISGGVDS) contributes to the ATP binding site. D38 serves as a coordination point for Mg(2+). R113 serves as a coordination point for deamido-NAD(+). Position 133 (T133) interacts with ATP. E138 is a Mg(2+) binding site. Deamido-NAD(+)-binding residues include K146 and D153. Positions 162 and 184 each coordinate ATP. Residue 244–245 (HK) coordinates deamido-NAD(+).

The protein belongs to the NAD synthetase family. In terms of assembly, homodimer.

The catalysed reaction is deamido-NAD(+) + NH4(+) + ATP = AMP + diphosphate + NAD(+) + H(+). Its pathway is cofactor biosynthesis; NAD(+) biosynthesis; NAD(+) from deamido-NAD(+) (ammonia route): step 1/1. In terms of biological role, catalyzes the ATP-dependent amidation of deamido-NAD to form NAD. Uses ammonia as a nitrogen source. In Thermococcus sibiricus (strain DSM 12597 / MM 739), this protein is NH(3)-dependent NAD(+) synthetase.